The chain runs to 352 residues: MEIDILSLFPDYFASPLQATILGRAIKQGALSVRSRDIREFGLGKWKQVDDSPYNGEGMLLMAEPVVQAIRSIRRKKSKVIYLSPQGQLLSAKKSRELASCSHLVLLCGHYEGIDERALTAEVDEEISIGDYVLTNGCAAALVLVDALARFIPGVLGNQESAEYDSLENGLLEGPQYTRPRVFEGESVPEVLLCGDHQKIADWRKQVSLERTRERRPDLYLQYFYGNSACLSTQEDLPRIEVVSPKTFSVVLEVQDLRKAKKFYSRMFGKECWDGDKLFLLGKTSLYLQQTKETRGPTTVFIELETDHDFVRFLKRWEMLGGELGEQGTGGFPLRQVFDLDGHIWVVSCVQK.

Residues Gly-109 and 129–134 each bind S-adenosyl-L-methionine; that span reads IGDYVL.

It belongs to the RNA methyltransferase TrmD family. In terms of assembly, homodimer.

The protein localises to the cytoplasm. It catalyses the reaction guanosine(37) in tRNA + S-adenosyl-L-methionine = N(1)-methylguanosine(37) in tRNA + S-adenosyl-L-homocysteine + H(+). Functionally, specifically methylates guanosine-37 in various tRNAs. The protein is tRNA (guanine-N(1)-)-methyltransferase of Chlamydia trachomatis serovar A (strain ATCC VR-571B / DSM 19440 / HAR-13).